The sequence spans 274 residues: NAD-dependent protein deacetylase (274 aa).

The Deacetylase sirtuin-type domain maps to 1–274; that stretch reads MDSRMSDLQA…CDEVLAEVVP (274 aa). Residues 26 to 46 and 104 to 107 each bind NAD(+); these read GAGCSTASGIPDYRDGQGQWK and QNVD. Catalysis depends on His-122, which acts as the Proton acceptor. Positions 130, 133, 181, and 184 each coordinate Zn(2+). NAD(+) contacts are provided by residues 221–223, 247–249, and Cys-265; these read GSS and NLG.

This sequence belongs to the sirtuin family. Class II subfamily. Requires Zn(2+) as cofactor.

It is found in the cytoplasm. The enzyme catalyses N(6)-acetyl-L-lysyl-[protein] + NAD(+) + H2O = 2''-O-acetyl-ADP-D-ribose + nicotinamide + L-lysyl-[protein]. NAD-dependent protein deacetylase which modulates the activities of several enzymes which are inactive in their acetylated form. The protein is NAD-dependent protein deacetylase of Bordetella pertussis (strain Tohama I / ATCC BAA-589 / NCTC 13251).